Reading from the N-terminus, the 384-residue chain is Probable RNA 3'-terminal phosphate cyclase-like protein (384 aa).

The protein belongs to the RNA 3'-terminal cyclase family. Type 2 subfamily. Part of the small subunit (SSU) processome, composed of more than 70 proteins and the RNA chaperone small nucleolar RNA (snoRNA) U3.

The protein resides in the nucleus. It is found in the nucleolus. Functionally, part of the small subunit (SSU) processome, first precursor of the small eukaryotic ribosomal subunit. During the assembly of the SSU processome in the nucleolus, many ribosome biogenesis factors, an RNA chaperone and ribosomal proteins associate with the nascent pre-rRNA and work in concert to generate RNA folding, modifications, rearrangements and cleavage as well as targeted degradation of pre-ribosomal RNA by the RNA exosome. Does not have cyclase activity. The protein is Probable RNA 3'-terminal phosphate cyclase-like protein (Rtc1) of Drosophila melanogaster (Fruit fly).